Reading from the N-terminus, the 754-residue chain is Ubiquitin carboxyl-terminal hydrolase 9 (754 aa).

Basic residues predominate over residues 1–14; it reads MIKRWLSVNRKKSH. The tract at residues 1–76 is disordered; sequence MIKRWLSVNR…SKFSSQTDNL (76 aa). Over residues 42 to 58 the composition is skewed to low complexity; the sequence is SIAKSPSAKSSTSSIPS. In terms of domain architecture, USP spans 134-667; the sequence is FGYENFGNTC…TAYVLFYKET (534 aa). The Nucleophile role is filled by cysteine 143. The segment covering 194 to 209 has biased composition (polar residues); sequence ETSTNSGNSNTGYQSN. Positions 194 to 273 are disordered; it reads ETSTNSGNSN…DNNEMERPQP (80 aa). Low complexity predominate over residues 222–233; sequence QSDQDNSSSSTQ. Basic and acidic residues predominate over residues 250-272; it reads GKDKSNYKDSAKKDDNNEMERPQ. Histidine 618 acts as the Proton acceptor in catalysis. The tract at residues 726 to 754 is disordered; the sequence is VKTAETKTPLNDKKRNKQKRKSRILSFIK. Over residues 727 to 738 the composition is skewed to basic and acidic residues; the sequence is KTAETKTPLNDK. Residues 739 to 748 show a composition bias toward basic residues; it reads KRNKQKRKSR.

The protein belongs to the peptidase C19 family.

It catalyses the reaction Thiol-dependent hydrolysis of ester, thioester, amide, peptide and isopeptide bonds formed by the C-terminal Gly of ubiquitin (a 76-residue protein attached to proteins as an intracellular targeting signal).. The chain is Ubiquitin carboxyl-terminal hydrolase 9 (UBP9) from Saccharomyces cerevisiae (strain ATCC 204508 / S288c) (Baker's yeast).